A 39-amino-acid polypeptide reads, in one-letter code: Photosystem II reaction center protein J (39 aa).

Residues isoleucine 7 to phenylalanine 27 traverse the membrane as a helical segment.

The protein belongs to the PsbJ family. In terms of assembly, PSII is composed of 1 copy each of membrane proteins PsbA, PsbB, PsbC, PsbD, PsbE, PsbF, PsbH, PsbI, PsbJ, PsbK, PsbL, PsbM, PsbT, PsbX, PsbY, PsbZ, Psb30/Ycf12, peripheral proteins PsbO, CyanoQ (PsbQ), PsbU, PsbV and a large number of cofactors. It forms dimeric complexes.

The protein resides in the cellular thylakoid membrane. Functionally, one of the components of the core complex of photosystem II (PSII). PSII is a light-driven water:plastoquinone oxidoreductase that uses light energy to abstract electrons from H(2)O, generating O(2) and a proton gradient subsequently used for ATP formation. It consists of a core antenna complex that captures photons, and an electron transfer chain that converts photonic excitation into a charge separation. This chain is Photosystem II reaction center protein J, found in Synechococcus sp. (strain ATCC 27144 / PCC 6301 / SAUG 1402/1) (Anacystis nidulans).